Here is a 181-residue protein sequence, read N- to C-terminus: Shikimate kinase 2 (181 aa).

12–17 (GCGKTT) is a binding site for ATP. The Mg(2+) site is built by threonine 16 and aspartate 32. Substrate contacts are provided by aspartate 34, arginine 58, and glycine 79. Residues 112 to 126 (EAEPEADLRPTLTGK) are LID domain. Arginine 120 contacts ATP. Arginine 139 is a binding site for substrate.

This sequence belongs to the shikimate kinase family. AroL subfamily. Monomer. It depends on Mg(2+) as a cofactor.

It localises to the cytoplasm. The catalysed reaction is shikimate + ATP = 3-phosphoshikimate + ADP + H(+). Its pathway is metabolic intermediate biosynthesis; chorismate biosynthesis; chorismate from D-erythrose 4-phosphate and phosphoenolpyruvate: step 5/7. Catalyzes the specific phosphorylation of the 3-hydroxyl group of shikimic acid using ATP as a cosubstrate. The polypeptide is Shikimate kinase 2 (Salmonella enteritidis PT4 (strain P125109)).